We begin with the raw amino-acid sequence, 254 residues long: Ferritin-1, chloroplastic (254 aa).

The transit peptide at 1 to 47 directs the protein to the chloroplast; the sequence is MASKALSSFTAKPAVSLLPHGVSSSASPSVMSLSFSRHTGGRGVVAA. Residues 48–86 form an extension peptide (EP) region; sequence SSTVDTNNMPMTGVVFQPFEEVKKADLAIPITSNASLAR. The region spanning 87–240 is the Ferritin-like diiron domain; that stretch reads QRYADSSEAA…DFITQLRMVG (154 aa). Fe cation is bound by residues glutamate 104, glutamate 139, histidine 142, glutamate 188, and glutamine 222.

This sequence belongs to the ferritin family. As to quaternary structure, oligomer of 24 subunits. There are two types of subunits: L (light) chain and H (heavy) chain. The major chain can be light or heavy, depending on the species and tissue type. The functional molecule forms a roughly spherical shell with a diameter of 12 nm and contains a central cavity into which the insoluble mineral iron core is deposited.

It localises to the plastid. The protein localises to the chloroplast. The catalysed reaction is 4 Fe(2+) + O2 + 4 H(+) = 4 Fe(3+) + 2 H2O. Stores iron in a soluble, non-toxic, readily available form. Important for iron homeostasis. Has ferroxidase activity. Iron is taken up in the ferrous form and deposited as ferric hydroxides after oxidation. The protein is Ferritin-1, chloroplastic (LSC30) of Brassica napus (Rape).